The sequence spans 643 residues: Conglutin alpha 2 (643 aa).

The N-terminal stretch at 1 to 22 is a signal peptide; the sequence is MAKPCLFSFSLCLLLLSSLCLA. Disulfide bonds link C31/C64 and C107/C464. Residues 36–261 enclose the Cupin type-1 1 domain; that stretch reads LNALEPDNRV…AFNVDEEIIN (226 aa). 3 disordered regions span residues 110 to 142, 190 to 243, and 285 to 458; these read TYEE…DSHQ, PRRF…VLSG, and PKSQ…SRNG. The segment covering 207 to 218 has biased composition (low complexity); the sequence is QEQQGQQREQQQ. Composition is skewed to basic and acidic residues over residues 228-237 and 298-313; these read HQQEQEEEGK and PRQR…RREE. Positions 314–323 are enriched in acidic residues; that stretch reads EKEEEEEEDE. 2 stretches are compositionally biased toward basic and acidic residues: residues 324 to 333 and 357 to 369; these read PRSRERYERQ and QEGR…WERT. The span at 422-433 shows a compositional bias: basic residues; the sequence is RGRHGGRGRRSG. The region spanning 470 to 616 is the Cupin type-1 2 domain; the sequence is ENIAKPSRAD…AFGLRLNQVS (147 aa). Residues 623-632 are compositionally biased toward polar residues; sequence NQGPLVSPQS. The tract at residues 623–643 is disordered; the sequence is NQGPLVSPQSESEDHTLPKVA. Positions 634 to 643 are enriched in basic and acidic residues; sequence SEDHTLPKVA.

This sequence belongs to the 11S seed storage protein (globulins) family. Hexamer; each subunit is composed of an acidic and a basic chain derived from a single precursor and linked by a disulfide bond. Component of globulins complexes which accumulate in seeds.

Its function is as follows. Sulfur-rich seed storage protein. This protein found in the seeds of many leguminous and non-leguminous plants is the source of sulfur-containing amino acids in seed meals. The sequence is that of Conglutin alpha 2 from Lupinus angustifolius (Narrow-leaved blue lupine).